Here is a 182-residue protein sequence, read N- to C-terminus: Putative lipoprotein LpqE (182 aa).

The first 29 residues, 1 to 29 (MNRCNIRLRLAGMTTWVASIALLAAALSG), serve as a signal peptide directing secretion. C30 is lipidated: N-palmitoyl cysteine. C30 carries the S-diacylglycerol cysteine lipid modification.

Its subcellular location is the cell membrane. The sequence is that of Putative lipoprotein LpqE (lpqE) from Mycobacterium bovis (strain ATCC BAA-935 / AF2122/97).